A 140-amino-acid chain; its full sequence is Nucleoside diphosphate kinase (140 aa).

ATP is bound by residues Lys-11, Phe-59, Arg-87, Thr-93, Arg-104, and Asn-114. His-117 serves as the catalytic Pros-phosphohistidine intermediate.

Belongs to the NDK family. In terms of assembly, homotetramer. Requires Mg(2+) as cofactor.

The protein resides in the cytoplasm. The catalysed reaction is a 2'-deoxyribonucleoside 5'-diphosphate + ATP = a 2'-deoxyribonucleoside 5'-triphosphate + ADP. It carries out the reaction a ribonucleoside 5'-diphosphate + ATP = a ribonucleoside 5'-triphosphate + ADP. Its function is as follows. Major role in the synthesis of nucleoside triphosphates other than ATP. The ATP gamma phosphate is transferred to the NDP beta phosphate via a ping-pong mechanism, using a phosphorylated active-site intermediate. The polypeptide is Nucleoside diphosphate kinase (Rhizorhabdus wittichii (strain DSM 6014 / CCUG 31198 / JCM 15750 / NBRC 105917 / EY 4224 / RW1) (Sphingomonas wittichii)).